Consider the following 230-residue polypeptide: Endonuclease NucS (230 aa).

It belongs to the NucS endonuclease family.

It is found in the cytoplasm. In terms of biological role, cleaves both 3' and 5' ssDNA extremities of branched DNA structures. This is Endonuclease NucS from Corynebacterium efficiens (strain DSM 44549 / YS-314 / AJ 12310 / JCM 11189 / NBRC 100395).